A 455-amino-acid chain; its full sequence is Ribosomal protein uS12 methylthiotransferase RimO (455 aa).

An MTTase N-terminal domain is found at 10-126 (RKVSMISLGC…ILELIEAHDR (117 aa)). 6 residues coordinate [4Fe-4S] cluster: cysteine 19, cysteine 55, cysteine 89, cysteine 164, cysteine 168, and cysteine 171. The region spanning 150–380 (SSPFYSTYVK…MKAQQRVSFR (231 aa)) is the Radical SAM core domain. Residues 383–451 (RALIGRVEPV…EYDLIGEIVD (69 aa)) enclose the TRAM domain.

Belongs to the methylthiotransferase family. RimO subfamily. Requires [4Fe-4S] cluster as cofactor.

The protein resides in the cytoplasm. It carries out the reaction L-aspartate(89)-[ribosomal protein uS12]-hydrogen + (sulfur carrier)-SH + AH2 + 2 S-adenosyl-L-methionine = 3-methylsulfanyl-L-aspartate(89)-[ribosomal protein uS12]-hydrogen + (sulfur carrier)-H + 5'-deoxyadenosine + L-methionine + A + S-adenosyl-L-homocysteine + 2 H(+). Catalyzes the methylthiolation of an aspartic acid residue of ribosomal protein uS12. The chain is Ribosomal protein uS12 methylthiotransferase RimO from Syntrophotalea carbinolica (strain DSM 2380 / NBRC 103641 / GraBd1) (Pelobacter carbinolicus).